A 101-amino-acid polypeptide reads, in one-letter code: Small ribosomal subunit protein uS14m (101 aa).

It belongs to the universal ribosomal protein uS14 family. As to quaternary structure, component of the mitochondrial ribosome small subunit (28S) which comprises a 12S rRNA and about 30 distinct proteins. Interacts with LIAT1.

The protein resides in the mitochondrion. The protein is Small ribosomal subunit protein uS14m (mrps14) of Dictyostelium discoideum (Social amoeba).